Consider the following 736-residue polypeptide: Gingipain R2 (736 aa).

The first 24 residues, 1-24 (MKKNFSRIVSIVAFSSLLGGMAFA), serve as a signal peptide directing secretion. Residues 25–229 (QPAERGRNPQ…SVFMNYEATR (205 aa)) constitute a propeptide that is removed on maturation. Ca(2+)-binding residues include Asp-307, Val-329, Asp-332, Tyr-334, Glu-336, Glu-390, and His-395. His-440 (proton donor) is an active-site residue. Residue Cys-473 is the Nucleophile of the active site. Residues Phe-478, Glu-487, Asp-521, Glu-522, Glu-525, His-531, Asp-613, and Glu-639 each coordinate Ca(2+).

This sequence belongs to the peptidase C25 family.

It localises to the secreted. The catalysed reaction is Hydrolysis of proteins and small molecule substrates, with a preference for Arg in P1.. Its activity is regulated as follows. Inhibited by human histatin-3 1/24 (histatin-5). Thiol protease. Acts synergistically with RgpA to catalyze the maturation of fimbrial subunits, such as FimA. Its proteolytic activity is a major factor in both periodontal tissue destruction and in evasion of host defense mechanisms. The protein is Gingipain R2 (rgpB) of Porphyromonas gingivalis (strain ATCC BAA-308 / W83).